Reading from the N-terminus, the 66-residue chain is Large ribosomal subunit protein bL33c (66 aa).

Belongs to the bacterial ribosomal protein bL33 family.

It is found in the plastid. Its subcellular location is the chloroplast. The chain is Large ribosomal subunit protein bL33c from Physcomitrium patens (Spreading-leaved earth moss).